We begin with the raw amino-acid sequence, 420 residues long: Serine hydroxymethyltransferase (420 aa).

Residues leucine 121 and 125 to 127 (GHL) each bind (6S)-5,6,7,8-tetrahydrofolate. Lysine 229 is subject to N6-(pyridoxal phosphate)lysine.

The protein belongs to the SHMT family. As to quaternary structure, homodimer. The cofactor is pyridoxal 5'-phosphate.

The protein localises to the cytoplasm. It catalyses the reaction (6R)-5,10-methylene-5,6,7,8-tetrahydrofolate + glycine + H2O = (6S)-5,6,7,8-tetrahydrofolate + L-serine. The protein operates within one-carbon metabolism; tetrahydrofolate interconversion. It functions in the pathway amino-acid biosynthesis; glycine biosynthesis; glycine from L-serine: step 1/1. In terms of biological role, catalyzes the reversible interconversion of serine and glycine with tetrahydrofolate (THF) serving as the one-carbon carrier. This reaction serves as the major source of one-carbon groups required for the biosynthesis of purines, thymidylate, methionine, and other important biomolecules. Also exhibits THF-independent aldolase activity toward beta-hydroxyamino acids, producing glycine and aldehydes, via a retro-aldol mechanism. The polypeptide is Serine hydroxymethyltransferase (Wigglesworthia glossinidia brevipalpis).